Reading from the N-terminus, the 276-residue chain is Diaminopimelate epimerase (276 aa).

Residues N13, Q46, and N66 each coordinate substrate. C75 functions as the Proton donor in the catalytic mechanism. Substrate is bound by residues 76–77, N159, N192, and 210–211; these read GN and ER. The active-site Proton acceptor is the C219. 220–221 lines the substrate pocket; the sequence is GS.

This sequence belongs to the diaminopimelate epimerase family. As to quaternary structure, homodimer.

The protein localises to the cytoplasm. The catalysed reaction is (2S,6S)-2,6-diaminopimelate = meso-2,6-diaminopimelate. Its pathway is amino-acid biosynthesis; L-lysine biosynthesis via DAP pathway; DL-2,6-diaminopimelate from LL-2,6-diaminopimelate: step 1/1. Catalyzes the stereoinversion of LL-2,6-diaminopimelate (L,L-DAP) to meso-diaminopimelate (meso-DAP), a precursor of L-lysine and an essential component of the bacterial peptidoglycan. The chain is Diaminopimelate epimerase from Colwellia psychrerythraea (strain 34H / ATCC BAA-681) (Vibrio psychroerythus).